A 546-amino-acid chain; its full sequence is Calcitonin receptor-like protein 1 (546 aa).

At 1 to 171 (MADATSPFNV…EVARNARKLE (171 aa)) the chain is on the cytoplasmic side. Residues 172-192 (FVGLGLSLVSLILAISIFSYF) traverse the membrane as a helical segment. Topologically, residues 193–205 (RRLRVFRNLLHLH) are extracellular. The chain crosses the membrane as a helical span at residues 206–226 (LMIAMLMVVILRLVLYIDLIF). At 227–251 (TGENGPHTNSAEGKTINTMPIVCEG) the chain is on the cytoplasmic side. The helical transmembrane segment at 252-272 (MFFFLEYFKTVTFCWMFLEGI) threads the bilayer. Topologically, residues 273–292 (YLNNQIVFGFFNSEPKLLPY) are extracellular. A helical transmembrane segment spans residues 293–313 (FIAGYGIPLVHTMLWLLVVLI). Over 314–333 (KKDFKVERCLGSYYLEPEFW) the chain is Cytoplasmic. A helical membrane pass occupies residues 334 to 354 (ILDGPRMAELVINLFFICNVI). Residues 355–377 (RVLYSKVRESNNTSEAGLKKSVK) are Extracellular-facing. 2 N-linked (GlcNAc...) asparagine glycosylation sites follow: Asn365 and Asn366. A helical transmembrane segment spans residues 378-398 (AAMMLLPLLGVPNIMQTIPFA). Over 399-403 (PTRDN) the chain is Cytoplasmic. A helical transmembrane segment spans residues 404–424 (IMVFAVWTYTASFTYMYQGLM). The Extracellular segment spans residues 425–546 (VASIYCFTNK…EGSNRSTKSP (122 aa)). Residues Asn472 and Asn476 are each glycosylated (N-linked (GlcNAc...) asparagine). Residues 472-546 (NGTANASAPQ…EGSNRSTKSP (75 aa)) are disordered. Residues 473–485 (GTANASAPQTNNA) show a composition bias toward polar residues. The segment covering 500–520 (KGSDDSTTKLMKDAVMEEEKN) has biased composition (basic and acidic residues). Asn540 carries N-linked (GlcNAc...) asparagine glycosylation.

Belongs to the G-protein coupled receptor 2 family. In terms of tissue distribution, expression was observed in the mechanosensory neuron pairs PLM, ALM, FLP, OLQD, and OLQV, the chemosensory neurons PHA, PHB, RMEV, the ring motor neurons RMED, and the pharyngeal interneuron pair I1. Expression in sensory neurons PHA, PQR and URY are responsible for mate searching behavior. Expressed in AIY, RIM, RIA, and other neurons.

The protein localises to the cell membrane. Its function is as follows. G-protein coupled receptor for PDF neuropeptides. Plays a role in responses to environmental signals, including chemicals and touch, and in modulating locomotory behaviors. Capable of transducing signals via an adenylate cyclase acy-1 cAMP-dependent pathway. Required to regulate the sex-specific expression of TGFbeta-like daf-7 in the ASJ chemosensory neurons, perhaps acting via acy-1. Involved in modulating mate searching behavior independent of nutritional status. In the presence of food, plays a role in initiating and extending exploratory roaming behavior, perhaps acting in AIY, RIM, RIA, and other neurons, in opposition to 5-hydroxytryptamine (serotonin) signaling. Involved in mediating arousal from the sleep-like state called lethargus, which occurs during molting between larval and adult stages, in part by regulating touch sensitivity. May play a role in circadian rhythms of locomotor activity. G-protein coupled receptor which is activated by neuropeptides PDF-1 and PDF-2. Probably acts through the G-alpha(s) type of G proteins to elevate cAMP levels. In terms of biological role, G-protein coupled receptor which is activated by neuropeptides PDF-1 and PDF-2; however, activation is lower compared to isoforms a and b. Probably inhibits cAMP levels through the G-alpha(i/o) type of G proteins. The protein is Calcitonin receptor-like protein 1 (pdfr-1) of Caenorhabditis elegans.